Here is a 582-residue protein sequence, read N- to C-terminus: Probable DNA ligase (582 aa).

E243 provides a ligand contact to ATP. Residue K245 is the N6-AMP-lysine intermediate of the active site. The ATP site is built by R250, R265, E295, F335, R410, and K416.

This sequence belongs to the ATP-dependent DNA ligase family. Requires Mg(2+) as cofactor.

It catalyses the reaction ATP + (deoxyribonucleotide)n-3'-hydroxyl + 5'-phospho-(deoxyribonucleotide)m = (deoxyribonucleotide)n+m + AMP + diphosphate.. Functionally, DNA ligase that seals nicks in double-stranded DNA during DNA replication, DNA recombination and DNA repair. In Dictyoglomus thermophilum (strain ATCC 35947 / DSM 3960 / H-6-12), this protein is Probable DNA ligase.